The sequence spans 623 residues: E3 ubiquitin-protein ligase ORTHRUS 5 (623 aa).

A PHD-type zinc finger spans residues 12–62 (DGVCMRCQVNPPSEETLTCGTCVTPWHVSCLLPESLASSTGDWECPDCSGV). Residues 129 to 169 (CSICIQLPERPVTTPCGHNFCLKCFEKWAVGQGKLTCMICR) form an RING-type 1 zinc finger. In terms of domain architecture, YDG spans 258 to 407 (TRNQGVLVGE…HKMCRYLFVR (150 aa)). The RING-type 2 zinc-finger motif lies at 498–555 (CQICRKVLSLPVTTPCAHNFCKACLEAKFAGITQLRDRSNGVRKLRAKKNIMTCPCCT). A disordered region spans residues 580–623 (KSEEEAEVAESSNISEEEGEEESEPPTKKIKMDKNSVGGTSLSA). Acidic residues predominate over residues 594–603 (SEEEGEEESE). Positions 604–613 (PPTKKIKMDK) are enriched in basic and acidic residues.

As to expression, expressed in inflorescences.

The protein resides in the nucleus. The catalysed reaction is S-ubiquitinyl-[E2 ubiquitin-conjugating enzyme]-L-cysteine + [acceptor protein]-L-lysine = [E2 ubiquitin-conjugating enzyme]-L-cysteine + N(6)-ubiquitinyl-[acceptor protein]-L-lysine.. It participates in protein modification; protein ubiquitination. Its function is as follows. E3 ubiquitin-protein ligase. Participates in CpG methylation-dependent transcriptional regulation and epigenetic transcriptional silencing. Mediates ubiquitination with the E2 ubiquitin-conjugating enzyme UBC11. This chain is E3 ubiquitin-protein ligase ORTHRUS 5 (ORTH5), found in Arabidopsis thaliana (Mouse-ear cress).